Consider the following 119-residue polypeptide: NLYQFKNMIKCTVPSRSWLDFANYGCYCGRGGSGTPVDDLDRCCQIHDNCYNEAGKISGCWPYFKTYSYECSQGTLTCKGDNNSCAASVCDCDRLAAICFAGAPYNNDNYNINLKARCQ.

Cystine bridges form between Cys11/Cys71, Cys26/Cys118, Cys28/Cys44, Cys43/Cys99, Cys50/Cys92, Cys60/Cys85, and Cys78/Cys90. Residues Tyr27, Gly29, and Gly31 each contribute to the Ca(2+) site. His47 is a catalytic residue. Asp48 contributes to the Ca(2+) binding site. Asp93 is an active-site residue.

Belongs to the phospholipase A2 family. Group I subfamily. D49 sub-subfamily. It depends on Ca(2+) as a cofactor. Expressed by the venom gland.

Its subcellular location is the secreted. It carries out the reaction a 1,2-diacyl-sn-glycero-3-phosphocholine + H2O = a 1-acyl-sn-glycero-3-phosphocholine + a fatty acid + H(+). PLA2 catalyzes the calcium-dependent hydrolysis of the 2-acyl groups in 3-sn-phosphoglycerides. The polypeptide is Acidic phospholipase A2 E (Naja oxiana (Central Asian cobra)).